The sequence spans 169 residues: Procalin (169 aa).

The signal sequence occupies residues 1–18 (MKTFIVITFIGILSYAYA). Intrachain disulfides connect cysteine 21-cysteine 125, cysteine 54-cysteine 168, and cysteine 83-cysteine 97.

It belongs to the calycin superfamily. Triabin family. In terms of tissue distribution, expressed in salivary glands.

It localises to the secreted. The chain is Procalin from Hospesneotomae protracta (Western bloodsucking conenose).